Reading from the N-terminus, the 352-residue chain is tRNA (guanine-N(1)-)-methyltransferase (352 aa).

S-adenosyl-L-methionine-binding positions include Gly-109 and 129 to 134 (IGDYVL).

This sequence belongs to the RNA methyltransferase TrmD family. As to quaternary structure, homodimer.

It localises to the cytoplasm. It catalyses the reaction guanosine(37) in tRNA + S-adenosyl-L-methionine = N(1)-methylguanosine(37) in tRNA + S-adenosyl-L-homocysteine + H(+). Functionally, specifically methylates guanosine-37 in various tRNAs. This Chlamydia trachomatis serovar L2 (strain ATCC VR-902B / DSM 19102 / 434/Bu) protein is tRNA (guanine-N(1)-)-methyltransferase.